The sequence spans 375 residues: 23S rRNA (uracil(747)-C(5))-methyltransferase RlmC (375 aa).

Positions 3, 11, 14, and 87 each coordinate [4Fe-4S] cluster. Gln212, Phe241, Glu262, and Asn307 together coordinate S-adenosyl-L-methionine. Cys334 acts as the Nucleophile in catalysis.

This sequence belongs to the class I-like SAM-binding methyltransferase superfamily. RNA M5U methyltransferase family. RlmC subfamily.

It catalyses the reaction uridine(747) in 23S rRNA + S-adenosyl-L-methionine = 5-methyluridine(747) in 23S rRNA + S-adenosyl-L-homocysteine + H(+). Functionally, catalyzes the formation of 5-methyl-uridine at position 747 (m5U747) in 23S rRNA. The protein is 23S rRNA (uracil(747)-C(5))-methyltransferase RlmC of Salmonella dublin (strain CT_02021853).